Here is a 501-residue protein sequence, read N- to C-terminus: Pyruvate kinase (501 aa).

Arginine 50 is a binding site for substrate. The K(+) site is built by asparagine 52, serine 54, aspartate 85, and threonine 86. 52–55 (NFSH) lines the ATP pocket. ATP-binding residues include arginine 92 and lysine 178. Glutamate 243 is a Mg(2+) binding site. Substrate contacts are provided by glycine 266, aspartate 267, and threonine 299. Residue aspartate 267 coordinates Mg(2+).

The protein belongs to the pyruvate kinase family. As to quaternary structure, homotetramer. The cofactor is Mg(2+). K(+) is required as a cofactor.

It carries out the reaction pyruvate + ATP = phosphoenolpyruvate + ADP + H(+). The protein operates within carbohydrate degradation; glycolysis; pyruvate from D-glyceraldehyde 3-phosphate: step 5/5. The protein is Pyruvate kinase (PYK1) of Naumovozyma castellii (Yeast).